A 300-amino-acid chain; its full sequence is Transcription factor DUO1 (300 aa).

2 consecutive HTH myb-type domains span residues 8–64 (KEEI…RPNL) and 65–116 (KNGC…KRLA). 2 DNA-binding regions (H-T-H motif) span residues 36 to 60 (WSSI…VNKL) and 89 to 112 (WARI…SSRQ). The segment covering 123-135 (SDASSSSFNPKSS) has biased composition (low complexity). Positions 123–145 (SDASSSSFNPKSSSSHRLKGKNV) are disordered. Basic residues predominate over residues 136-145 (SSHRLKGKNV).

Confined to inflorescences, especially in stamens and pollen.

It localises to the nucleus. In terms of biological role, transcription activator that acts as a positive regulator of male germline development by promoting both gametic cell specification and cell cycle progression. Binds to canonical MYB sites 5'-AACCGTC-3', 5'-AAACCGC-3' and 5'-AACCGT-3' in promoters to trigger the expression of male germline-specific or enriched genes (e.g. MGH3, GEX2 and GCS1), including those required for fertilization. Required for sperm cell specification leading to pollen maturation by activating a germline-specific regulon. Involved in pollen mitosis entry at G2-M transition via the regulation of CYCB1-1, DAZ1 and DAZ2 expression. This chain is Transcription factor DUO1, found in Arabidopsis thaliana (Mouse-ear cress).